We begin with the raw amino-acid sequence, 514 residues long: Na(+)/H(+) antiporter NhaB (514 aa).

Transmembrane regions (helical) follow at residues 23-43 (LALL…SFVA), 52-72 (IFTL…LLAI), 97-117 (LLLM…LFIF), 120-140 (LLLS…AAAF), 144-164 (FLDA…FYGI), 202-222 (LMMH…VGEP), 238-258 (FFLR…LTCM), 303-323 (AIIG…VGLI), 357-377 (LTVF…APII), 391-411 (LFYL…VGTI), 447-467 (ATPN…APLI), and 475-495 (VWMA…CVEF).

This sequence belongs to the NhaB Na(+)/H(+) (TC 2.A.34) antiporter family.

The protein localises to the cell inner membrane. It catalyses the reaction 2 Na(+)(in) + 3 H(+)(out) = 2 Na(+)(out) + 3 H(+)(in). Functionally, na(+)/H(+) antiporter that extrudes sodium in exchange for external protons. This chain is Na(+)/H(+) antiporter NhaB, found in Salmonella arizonae (strain ATCC BAA-731 / CDC346-86 / RSK2980).